The sequence spans 308 residues: uncharacterized protein (308 aa).

A compositionally biased stretch (polar residues) spans 43-55 (SQYGTWADQHQNG). The tract at residues 43-289 (SQYGTWADQH…KEERSEECSP (247 aa)) is disordered. Ser-62 carries the post-translational modification Phosphoserine. Over residues 80–90 (HLSSYTESTSV) the composition is skewed to polar residues. The span at 91–109 (EQRDSSRDRRSSSVDRSSS) shows a compositional bias: basic and acidic residues. Polar residues predominate over residues 136–152 (IHQTSVLDSSALKTRVQ). Residues 153-168 (LSKRSRRRAPISHSLR) show a composition bias toward basic residues. Ser-166 is modified (phosphoserine). 2 stretches are compositionally biased toward basic and acidic residues: residues 175 to 186 (SESRSPLEEESH) and 193 to 216 (DSTE…ERTP). A phosphoserine mark is found at Ser-205, Ser-259, Ser-262, and Ser-288.

This is an uncharacterized protein from Mus musculus (Mouse).